A 586-amino-acid chain; its full sequence is CTP synthase 2 (586 aa).

The Glutamine amidotransferase type-1 domain maps to 300 to 554 (SIALVGKYTK…LAATGNLNAY (255 aa)). Active-site for GATase activity residues include cysteine 399, histidine 526, and glutamate 528. Positions 564–586 (SDRYSDASDDSFSEPRLAELEIS) are disordered. Phosphoserine occurs at positions 568, 571, and 574.

It belongs to the CTP synthase family.

It carries out the reaction UTP + L-glutamine + ATP + H2O = CTP + L-glutamate + ADP + phosphate + 2 H(+). Its pathway is pyrimidine metabolism; CTP biosynthesis via de novo pathway; CTP from UDP: step 2/2. Functionally, catalyzes the ATP-dependent amination of UTP to CTP with either L-glutamine or ammonia as the source of nitrogen. Constitutes the rate-limiting enzyme in the synthesis of cytosine nucleotides. This chain is CTP synthase 2 (CTPS2), found in Bos taurus (Bovine).